We begin with the raw amino-acid sequence, 341 residues long: UDP-N-acetylglucosamine--N-acetylmuramyl-(pentapeptide) pyrophosphoryl-undecaprenol N-acetylglucosamine transferase (341 aa).

UDP-N-acetyl-alpha-D-glucosamine-binding positions include 10 to 12 (TGG), Asn-124, Ser-177, and Gln-275.

Belongs to the glycosyltransferase 28 family. MurG subfamily.

Its subcellular location is the cell inner membrane. It catalyses the reaction di-trans,octa-cis-undecaprenyl diphospho-N-acetyl-alpha-D-muramoyl-L-alanyl-D-glutamyl-meso-2,6-diaminopimeloyl-D-alanyl-D-alanine + UDP-N-acetyl-alpha-D-glucosamine = di-trans,octa-cis-undecaprenyl diphospho-[N-acetyl-alpha-D-glucosaminyl-(1-&gt;4)]-N-acetyl-alpha-D-muramoyl-L-alanyl-D-glutamyl-meso-2,6-diaminopimeloyl-D-alanyl-D-alanine + UDP + H(+). The protein operates within cell wall biogenesis; peptidoglycan biosynthesis. Its function is as follows. Cell wall formation. Catalyzes the transfer of a GlcNAc subunit on undecaprenyl-pyrophosphoryl-MurNAc-pentapeptide (lipid intermediate I) to form undecaprenyl-pyrophosphoryl-MurNAc-(pentapeptide)GlcNAc (lipid intermediate II). The protein is UDP-N-acetylglucosamine--N-acetylmuramyl-(pentapeptide) pyrophosphoryl-undecaprenol N-acetylglucosamine transferase of Campylobacter hominis (strain ATCC BAA-381 / DSM 21671 / CCUG 45161 / LMG 19568 / NCTC 13146 / CH001A).